Consider the following 425-residue polypeptide: MLDQRKIRENPTLIEKGLARRGLKVNLAPLTEASERLKGLEQHRNSLQAKGNLIGKEVGQKIKSGISPNSEEVVSLRSKGNELKREINVLEEEEKALAKSIRKRILNYPNIPYSECPDGKDENDNLQIRNWGNPLKGEGYKEHWEIAEELGLLDTEKSVRIAKSRFVTLFNHGARLERSLINFMLDIHTSKGYSEVLPPVLVNTASLEGSGQLPKFAEESFKCSEDDLWLTPTAEVPLTSLHRNEVIPFEKLPIKYVAYSPCFRREAGSYGRDTRGLIRLHQFNKVELYWFVEPKKSKEAHQIITADAEAILQKLELPYRVVELCSGDLGFSASCTYDLEVWLPGANSYREISSCSNCDDFQARRSFIRTKKGNQTQLVHTLNASGLAIGRTMAAILENGQQSDGTVKLPKALVPYFGENQLTPQ.

233-235 (TAE) is a binding site for L-serine. Position 264-266 (264-266 (RRE)) interacts with ATP. E287 contacts L-serine. 351-354 (EISS) is an ATP binding site. S385 serves as a coordination point for L-serine.

It belongs to the class-II aminoacyl-tRNA synthetase family. Type-1 seryl-tRNA synthetase subfamily. In terms of assembly, homodimer. The tRNA molecule binds across the dimer.

It localises to the cytoplasm. It catalyses the reaction tRNA(Ser) + L-serine + ATP = L-seryl-tRNA(Ser) + AMP + diphosphate + H(+). The catalysed reaction is tRNA(Sec) + L-serine + ATP = L-seryl-tRNA(Sec) + AMP + diphosphate + H(+). Its pathway is aminoacyl-tRNA biosynthesis; selenocysteinyl-tRNA(Sec) biosynthesis; L-seryl-tRNA(Sec) from L-serine and tRNA(Sec): step 1/1. Functionally, catalyzes the attachment of serine to tRNA(Ser). Is also able to aminoacylate tRNA(Sec) with serine, to form the misacylated tRNA L-seryl-tRNA(Sec), which will be further converted into selenocysteinyl-tRNA(Sec). This is Serine--tRNA ligase from Prochlorococcus marinus (strain SARG / CCMP1375 / SS120).